Here is a 248-residue protein sequence, read N- to C-terminus: Triosephosphate isomerase (248 aa).

Residue 9-11 (NWK) coordinates substrate. Catalysis depends on His-94, which acts as the Electrophile. The active-site Proton acceptor is Glu-166. Substrate-binding positions include Gly-172, Ser-212, and 233 to 234 (GG).

The protein belongs to the triosephosphate isomerase family. As to quaternary structure, homodimer.

Its subcellular location is the cytoplasm. The enzyme catalyses D-glyceraldehyde 3-phosphate = dihydroxyacetone phosphate. Its pathway is carbohydrate biosynthesis; gluconeogenesis. It participates in carbohydrate degradation; glycolysis; D-glyceraldehyde 3-phosphate from glycerone phosphate: step 1/1. Involved in the gluconeogenesis. Catalyzes stereospecifically the conversion of dihydroxyacetone phosphate (DHAP) to D-glyceraldehyde-3-phosphate (G3P). The polypeptide is Triosephosphate isomerase (Clostridium botulinum (strain Langeland / NCTC 10281 / Type F)).